The following is a 329-amino-acid chain: Serpentine receptor class alpha-6 (329 aa).

The next 7 membrane-spanning stretches (helical) occupy residues 26 to 46, 68 to 88, 104 to 124, 143 to 163, 187 to 207, 238 to 258, and 273 to 293; these read VDLL…KIVI, LYQI…FFML, YFKV…GLLI, IGVC…FIIL, NLFS…SIFI, ICFL…GILI, and FWIA…VLLI.

It belongs to the nematode receptor-like protein sra family.

It localises to the membrane. This chain is Serpentine receptor class alpha-6 (sra-6), found in Caenorhabditis elegans.